Consider the following 338-residue polypeptide: Heat shock factor 2-binding protein (338 aa).

The tract at residues 1–20 is disordered; sequence MAATVGDGSGTEEACRNMES. A coiled-coil region spans residues 12 to 126; it reads EEACRNMESK…LLQQAEYCTQ (115 aa). Residues 18–55 are interaction with BRME1; the sequence is MESKEEFVKVRKKDLERLTTEVMQIRDFLPRILNGELL. The interaction with BRCA2 stretch occupies residues 87–338; it reads ARLETAQADS…EDLRALDCNV (252 aa).

Interacts (via C-terminus) with BNC1. Associates with HSF2. The interaction seems to occur between the trimerization domain of HSF2 and the N-terminal hydrophilic region of HSF2BP. Interacts (via N-terminus) with BRME1. Interacts with BRCA2 and BRME1; the interactions are direct and allow the formation of a ternary complex. The complex BRME1:HSF2BP:BRCA2 interacts with SPATA22, MEIOB and RAD51. Sumoylated by UBE2I in response to MEKK1-mediated stimuli. Expressed in testis and, to a lesser extent, in lung and muscle.

Its subcellular location is the cytoplasm. The protein resides in the chromosome. Meiotic recombination factor component of recombination bridges involved in meiotic double-strand break repair. Modulates the localization of recombinases DMC1:RAD51 to meiotic double-strand break (DSB) sites through the interaction with BRCA2 and its recruitment during meiotic recombination. Indispensable for the DSB repair, homologous synapsis, and crossover formation that are needed for progression past metaphase I, is essential for spermatogenesis and male fertility. Required for proper recombinase recruitment in female meiosis. Inhibits BNC1 transcriptional activity during spermatogenesis, probably by sequestering it in the cytoplasm. May be involved in modulating HSF2 activation in testis. This chain is Heat shock factor 2-binding protein, found in Mus musculus (Mouse).